A 315-amino-acid chain; its full sequence is Cell division protein FtsZ (315 aa).

Residues 55-57 (GTG), glutamate 98, arginine 102, and aspartate 146 contribute to the GTP site.

The protein belongs to the FtsZ family. As to quaternary structure, homodimer. Polymerizes to form a dynamic ring structure in a strictly GTP-dependent manner. Interacts directly with several other division proteins.

It is found in the cytoplasm. Essential cell division protein that forms a contractile ring structure (Z ring) at the future cell division site. The regulation of the ring assembly controls the timing and the location of cell division. One of the functions of the FtsZ ring is to recruit other cell division proteins to the septum to produce a new cell wall between the dividing cells. Binds GTP and shows GTPase activity. This Wolbachia pipientis protein is Cell division protein FtsZ.